The primary structure comprises 415 residues: Diaminopimelate decarboxylase (415 aa).

N6-(pyridoxal phosphate)lysine is present on K54. Pyridoxal 5'-phosphate contacts are provided by residues G223 and 264 to 267 (EPGR). Substrate contacts are provided by R267, R303, and Y307. The active-site Proton donor is the C338. E339 and Y374 together coordinate substrate. Position 374 (Y374) interacts with pyridoxal 5'-phosphate.

It belongs to the Orn/Lys/Arg decarboxylase class-II family. LysA subfamily. Homodimer. Pyridoxal 5'-phosphate is required as a cofactor.

The enzyme catalyses meso-2,6-diaminopimelate + H(+) = L-lysine + CO2. The protein operates within amino-acid biosynthesis; L-lysine biosynthesis via DAP pathway; L-lysine from DL-2,6-diaminopimelate: step 1/1. Its function is as follows. Specifically catalyzes the decarboxylation of meso-diaminopimelate (meso-DAP) to L-lysine. This Buchnera aphidicola subsp. Acyrthosiphon pisum (strain APS) (Acyrthosiphon pisum symbiotic bacterium) protein is Diaminopimelate decarboxylase.